The following is a 166-amino-acid chain: MGPILVLLVLLSLLEAGSANYDPCLDFDPENCTLTFAPDTSRICGVLIKCGWECRSVEITHNNKTWNNTLSTTWEPGVPQWYTVSVRGPDGSIRISNNTFIFSKMCDLAMFMSKQYSLWPPSKDNIVTFSIAYCLCACLLTALLCVCIHLLVTTRIKNANNKEKMP.

Residues 1-19 (MGPILVLLVLLSLLEAGSA) form the signal peptide. Residues 20–131 (NYDPCLDFDP…SKDNIVTFSI (112 aa)) are Lumenal-facing. A glycan (N-linked (GlcNAc...) asparagine; by host) is linked at Asn-31. 2 disulfides stabilise this stretch: Cys-32–Cys-50 and Cys-44–Cys-106. Asn-63, Asn-67, and Asn-97 each carry an N-linked (GlcNAc...) asparagine; by host glycan. The chain crosses the membrane as a helical span at residues 132–152 (AYCLCACLLTALLCVCIHLLV). Over 153 to 166 (TTRIKNANNKEKMP) the chain is Cytoplasmic. The short motif at 162–166 (KEKMP) is the Di-lysine motif element.

This sequence belongs to the adenoviridae E19 family. Both disulfide bonds are absolutely critical for the interaction with MHC antigens. In terms of processing, N-glycosylated; high-mannose.

It is found in the host endoplasmic reticulum membrane. Functionally, binds and retains class I heavy chains in the endoplasmic reticulum during the early period of virus infection, thereby impairing their transport to the cell surface. Also delays the expression of class I alleles that it cannot affect by direct retention. Binds transporters associated with antigen processing (TAP) and acts as a tapasin inhibitor, preventing class I/TAP association. In consequence, infected cells are masked for immune recognition by cytotoxic T-lymphocytes. The protein is Early E3 18.5 kDa glycoprotein of Human adenovirus B serotype 11 (strain BC34) (HAdV-11).